Consider the following 114-residue polypeptide: Iron-sulfur cluster insertion protein ErpA (114 aa).

Residues C42, C106, and C108 each contribute to the iron-sulfur cluster site.

The protein belongs to the HesB/IscA family. As to quaternary structure, homodimer. The cofactor is iron-sulfur cluster.

Its function is as follows. Required for insertion of 4Fe-4S clusters for at least IspG. The chain is Iron-sulfur cluster insertion protein ErpA from Sodalis glossinidius (strain morsitans).